Consider the following 803-residue polypeptide: Cation channel sperm-associated auxiliary subunit delta (803 aa).

A signal peptide spans Met-1–Ala-15. The Extracellular segment spans residues Gln-16–Met-720. Intrachain disulfides connect Cys-19–Cys-365, Cys-55–Cys-142, Cys-141–Cys-148, Cys-383–Cys-492, Cys-506–Cys-698, Cys-521–Cys-568, and Cys-620–Cys-648. 7 N-linked (GlcNAc...) asparagine glycosylation sites follow: Asn-226, Asn-418, Asn-436, Asn-468, Asn-534, Asn-545, and Asn-626. The helical transmembrane segment at Thr-721 to Lys-742 threads the bilayer. Residues Gln-743–Lys-803 are Cytoplasmic-facing. Positions Ser-782 to Lys-803 are disordered.

It belongs to the CATSPERD family. As to quaternary structure, component of the CatSper complex or CatSpermasome composed of the core pore-forming members CATSPER1, CATSPER2, CATSPER3 and CATSPER4 as well as auxiliary members CATSPERB, CATSPERG, CATSPERD, CATSPERE, CATSPERZ, C2CD6/CATSPERT, SLCO6C1, TMEM249, TMEM262 and EFCAB9. HSPA1 may be an additional auxiliary complex member. The core complex members CATSPER1, CATSPER2, CATSPER3 and CATSPER4 form a heterotetrameric channel. The auxiliary CATSPERB, CATSPERG, CATSPERD and CATSPERE subunits form a pavilion-like structure over the pore which stabilizes the complex through interactions with CATSPER4, CATSPER3, CATSPER1 and CATSPER2 respectively. SLCO6C1 interacts with CATSPERE and TMEM262/CATSPERH interacts with CATSPERB, further stabilizing the complex. C2CD6/CATSPERT interacts at least with CATSPERD and is required for targeting the CatSper complex in the flagellar membrane.

The protein resides in the cell projection. Its subcellular location is the cilium. It localises to the flagellum membrane. Functionally, auxiliary component of the CatSper complex, a complex involved in sperm cell hyperactivation. Sperm cell hyperactivation is needed for sperm motility which is essential late in the preparation of sperm for fertilization. Required for CATSPER1 stability before intraflagellar transport and/or incorporation of the CatSper complex channel into the flagellar membrane. The chain is Cation channel sperm-associated auxiliary subunit delta from Rattus norvegicus (Rat).